Here is a 403-residue protein sequence, read N- to C-terminus: Tryptophan synthase beta chain (403 aa).

Residue Lys-93 is modified to N6-(pyridoxal phosphate)lysine.

Belongs to the TrpB family. In terms of assembly, tetramer of two alpha and two beta chains. It depends on pyridoxal 5'-phosphate as a cofactor.

It carries out the reaction (1S,2R)-1-C-(indol-3-yl)glycerol 3-phosphate + L-serine = D-glyceraldehyde 3-phosphate + L-tryptophan + H2O. The protein operates within amino-acid biosynthesis; L-tryptophan biosynthesis; L-tryptophan from chorismate: step 5/5. In terms of biological role, the beta subunit is responsible for the synthesis of L-tryptophan from indole and L-serine. The sequence is that of Tryptophan synthase beta chain from Acinetobacter baylyi (strain ATCC 33305 / BD413 / ADP1).